The following is a 322-amino-acid chain: NADH-quinone oxidoreductase subunit H (322 aa).

9 consecutive transmembrane segments (helical) span residues 15–35 (FFKV…LSIV), 50–69 (NRVG…KILF), 81–101 (FIFV…IPII), 114–134 (IGIL…LFAG), 149–169 (ACVQ…GVVA), 186–206 (IWNV…GLAV), 237–257 (FFIG…TLFF), 265–285 (IPGC…FILI), and 302–322 (WKFC…LILV).

The protein belongs to the complex I subunit 1 family. NDH-1 is composed of 13 different subunits. Subunits NuoA, H, J, K, L, M, N constitute the membrane sector of the complex.

It is found in the cell membrane. The enzyme catalyses a quinone + NADH + 5 H(+)(in) = a quinol + NAD(+) + 4 H(+)(out). Functionally, NDH-1 shuttles electrons from NADH, via FMN and iron-sulfur (Fe-S) centers, to quinones in the respiratory chain. The immediate electron acceptor for the enzyme in this species is believed to be ubiquinone. Couples the redox reaction to proton translocation (for every two electrons transferred, four hydrogen ions are translocated across the cytoplasmic membrane), and thus conserves the redox energy in a proton gradient. This subunit may bind ubiquinone. This chain is NADH-quinone oxidoreductase subunit H, found in Buchnera aphidicola subsp. Acyrthosiphon pisum (strain 5A).